We begin with the raw amino-acid sequence, 985 residues long: Lateral signaling target protein 2 homolog (985 aa).

4 disordered regions span residues 310-453 (PLGS…ETDE), 498-520 (EYGA…PSTS), 533-640 (LRLP…SSLS), and 747-892 (DNVF…TTTA). Composition is skewed to low complexity over residues 327–348 (HPTT…TNTH), 384–393 (SLSPNSTPTA), and 401–422 (PSHS…PADW). Acidic residues predominate over residues 423 to 453 (SDGDDEDEEDDDDDIEVEEEELDSTDDETDE). A phosphoserine mark is found at serine 537 and serine 538. Composition is skewed to basic residues over residues 563-589 (VYRH…HHQH) and 596-607 (HPHRTTRSGRKR). 2 stretches are compositionally biased toward low complexity: residues 629 to 640 (ASGDTSAASSLS) and 761 to 770 (NGNQANASAQ). Positions 776–785 (GSIQRNNTVD) are enriched in polar residues. Phosphoserine is present on serine 808. Residues 812 to 866 (QESASTSTSSSQLHQEQQQLQIQVQRQRNNSVGSNTPSSASSTSSSSEQNSPVSA) are compositionally biased toward low complexity. Positions 875–885 (QSNNETQMPSS) are enriched in polar residues. The FYVE-type zinc-finger motif lies at 904–964 (DGKAPRCMSC…VCRECYVREV (61 aa)). Residues cysteine 910, cysteine 913, cysteine 926, cysteine 929, cysteine 934, cysteine 937, cysteine 956, and cysteine 959 each coordinate Zn(2+).

Belongs to the lst-2 family.

Functionally, negative regulator of epidermal growth factor receptor (EGFR) signaling. This Drosophila ananassae (Fruit fly) protein is Lateral signaling target protein 2 homolog.